Reading from the N-terminus, the 156-residue chain is Cyanate hydratase (156 aa).

Residues Arg96, Glu99, and Ser122 contribute to the active site.

Belongs to the cyanase family.

The enzyme catalyses cyanate + hydrogencarbonate + 3 H(+) = NH4(+) + 2 CO2. In terms of biological role, catalyzes the reaction of cyanate with bicarbonate to produce ammonia and carbon dioxide. In Mycobacteroides abscessus (strain ATCC 19977 / DSM 44196 / CCUG 20993 / CIP 104536 / JCM 13569 / NCTC 13031 / TMC 1543 / L948) (Mycobacterium abscessus), this protein is Cyanate hydratase.